Reading from the N-terminus, the 398-residue chain is S-adenosylmethionine synthase (398 aa).

Residue 136-141 coordinates ATP; sequence GTGSSD.

Belongs to the AdoMet synthase 2 family. Mg(2+) serves as cofactor.

The catalysed reaction is L-methionine + ATP + H2O = S-adenosyl-L-methionine + phosphate + diphosphate. Its pathway is amino-acid biosynthesis; S-adenosyl-L-methionine biosynthesis; S-adenosyl-L-methionine from L-methionine: step 1/1. Its function is as follows. Catalyzes the formation of S-adenosylmethionine from methionine and ATP. This is S-adenosylmethionine synthase from Methanosarcina barkeri (strain Fusaro / DSM 804).